The following is a 79-amino-acid chain: Acyl carrier protein (79 aa).

Residues 2–77 form the Carrier domain; that stretch reads SDTAERVKKI…DAIDFINQKT (76 aa). Serine 37 is modified (O-(pantetheine 4'-phosphoryl)serine).

This sequence belongs to the acyl carrier protein (ACP) family. 4'-phosphopantetheine is transferred from CoA to a specific serine of apo-ACP by AcpS. This modification is essential for activity because fatty acids are bound in thioester linkage to the sulfhydryl of the prosthetic group.

The protein localises to the cytoplasm. It functions in the pathway lipid metabolism; fatty acid biosynthesis. In terms of biological role, carrier of the growing fatty acid chain in fatty acid biosynthesis. The polypeptide is Acyl carrier protein (Rhodospirillum centenum (strain ATCC 51521 / SW)).